A 247-amino-acid chain; its full sequence is LHFPL tetraspan subfamily member 4 protein (247 aa).

Helical transmembrane passes span Ile22–Ile42, Phe97–Phe117, Ile127–Pro147, and Ile178–Gly198.

The protein belongs to the LHFP family. Interacts with GABA(A) receptor subunits. Identified in a complex of 720 kDa composed of LHFPL4, NLGN2, GABRA1, GABRB2, GABRG2 and GABRB3. Interacts with GABRB3. Interacts with GABRA2. Interacts with GABRG2. Interacts with GABRA1. Interacts with NLGN2; leading to mutual regulation of protein level and synaptic clustering.

It is found in the cell projection. It localises to the dendrite. The protein localises to the postsynaptic cell membrane. Plays a role in the regulation of inhibitory synapse formation and function by being involved in maintening gamma-aminobutyric acid receptors (GABAARs) clustering and their associated scaffold proteins at inhibitory synaptic sites. Acts in concert with NLGN2 to recruit or stabilize GABAARs. The protein is LHFPL tetraspan subfamily member 4 protein of Homo sapiens (Human).